The primary structure comprises 290 residues: ATP synthase gamma chain (290 aa).

Belongs to the ATPase gamma chain family. As to quaternary structure, F-type ATPases have 2 components, CF(1) - the catalytic core - and CF(0) - the membrane proton channel. CF(1) has five subunits: alpha(3), beta(3), gamma(1), delta(1), epsilon(1). CF(0) has three main subunits: a, b and c.

The protein resides in the cell inner membrane. In terms of biological role, produces ATP from ADP in the presence of a proton gradient across the membrane. The gamma chain is believed to be important in regulating ATPase activity and the flow of protons through the CF(0) complex. The sequence is that of ATP synthase gamma chain from Dictyoglomus turgidum (strain DSM 6724 / Z-1310).